A 139-amino-acid chain; its full sequence is Putative general secretion pathway protein B (139 aa).

A helical membrane pass occupies residues 28–48; sequence IIYVICLLLICLWFAGMVLVG. The segment at 93–139 is disordered; that stretch reads VEEEDDPGVAVENAPSSSEDEENTVEESEEKAGLRERVKNALNELER. Positions 110-121 are enriched in acidic residues; sequence SEDEENTVEESE. A compositionally biased stretch (basic and acidic residues) spans 122-139; it reads EKAGLRERVKNALNELER.

It is found in the cell membrane. Functionally, part of a cryptic operon that encodes proteins involved in type II secretion pathway in other organisms, but is not expressed in strain K12 under standard laboratory conditions. May play a regulatory role under conditions of derepressed gsp gene expression. The protein is Putative general secretion pathway protein B of Escherichia coli (strain K12).